Reading from the N-terminus, the 284-residue chain is Protease HtpX (284 aa).

Transmembrane regions (helical) follow at residues 4–24 (ILLF…ILSL) and 33–53 (MGLL…SLLM). Histidine 139 contributes to the Zn(2+) binding site. Residue glutamate 140 is part of the active site. Position 143 (histidine 143) interacts with Zn(2+). A run of 2 helical transmembrane segments spans residues 147–167 (GDMV…IFAA) and 187–207 (IYFL…SMIA). Glutamate 215 lines the Zn(2+) pocket.

The protein belongs to the peptidase M48B family. The cofactor is Zn(2+).

The protein resides in the cell inner membrane. The chain is Protease HtpX from Mannheimia succiniciproducens (strain KCTC 0769BP / MBEL55E).